A 305-amino-acid chain; its full sequence is tRNA dimethylallyltransferase 1 (305 aa).

ATP is bound at residue 10–17 (GPTASGKS). Position 12–17 (12–17 (TASGKS)) interacts with substrate. The interval 35–38 (DSLT) is interaction with substrate tRNA.

The protein belongs to the IPP transferase family. As to quaternary structure, monomer. The cofactor is Mg(2+).

The enzyme catalyses adenosine(37) in tRNA + dimethylallyl diphosphate = N(6)-dimethylallyladenosine(37) in tRNA + diphosphate. Functionally, catalyzes the transfer of a dimethylallyl group onto the adenine at position 37 in tRNAs that read codons beginning with uridine, leading to the formation of N6-(dimethylallyl)adenosine (i(6)A). The protein is tRNA dimethylallyltransferase 1 of Trichlorobacter lovleyi (strain ATCC BAA-1151 / DSM 17278 / SZ) (Geobacter lovleyi).